A 254-amino-acid chain; its full sequence is uncharacterized protein (254 aa).

The S4 RNA-binding domain occupies 14–81; the sequence is IRLQKVLSQA…DSLVYLALNK (68 aa). The active-site Nucleophile is the Asp119.

It belongs to the pseudouridine synthase RsuA family.

The catalysed reaction is a uridine in RNA = a pseudouridine in RNA. This is an uncharacterized protein from Mycobacterium bovis (strain ATCC BAA-935 / AF2122/97).